The following is a 648-amino-acid chain: Serine/arginine repetitive matrix protein 3 (648 aa).

Residues 1–44 are disordered; it reads MSSTVNNGATGMPAPPDAANGFPQPGASSGSWPRAEEELRAAEP. The region spanning 55–98 is the CWF21 domain; it reads LDHERKRRVELKCMELQEMMEEQGYSEEEIRQKVGTFRQMLMEK. A compositionally biased stretch (basic and acidic residues) spans 99–109; that stretch reads EGVLTREDRPG. 2 disordered regions span residues 99-139 and 154-648; these read EGVL…DGPV and YRTK…SGGF. Composition is skewed to basic residues over residues 168–186, 199–211, and 219–243; these read PKKKKKKKGSHRRSRKKRR, LRKKKKNVKKHRR, and RRKRRYRSRSLKSKRKEKNKERKRP. Low complexity-rich tracts occupy residues 257 to 276 and 289 to 317; these read SASSHSPSMSSHYSDSGSPS and TGSQRSSGSRSPSPSGGSGWGSPQQNGGS. Positions 381-409 are enriched in basic residues; it reads ARRRRRRRRRRRSRSSANAPRRRGRRRTK. 3 stretches are compositionally biased toward low complexity: residues 414–428, 461–471, and 493–502; these read RGSSRSLSGAHSSSD, RPASTSPSPGT, and SWSSSRSPSK. The span at 525-544 shows a compositional bias: basic and acidic residues; the sequence is LGRDKDSEGRARHAEAEAAR. The segment covering 545–560 has biased composition (basic residues); that stretch reads TRRRSRSYSPIRKRRR. Positions 579–648 are enriched in low complexity; that stretch reads IPYYRPSPSS…SRSSSESGGF (70 aa).

Belongs to the CWC21 family.

Functionally, may play a role in regulating breast cancer cell invasiveness. May be involved in RYBP-mediated breast cancer progression. This chain is Serine/arginine repetitive matrix protein 3 (Srrm3), found in Mus musculus (Mouse).